The following is a 66-amino-acid chain: COP9 signalosome complex subunit 6a (66 aa).

This sequence belongs to the peptidase M67A family. CSN6 subfamily. In terms of assembly, component of the CSN complex, probably composed of CSN1, CSN2, CSN3, CSN4, CSN5 (CSN5A or CSN5B), CSN6 (CSN6A or CSN6B), CSN7 and CSN8.

It is found in the cytoplasm. The protein localises to the nucleus. Component of the COP9 signalosome complex (CSN), a complex involved in various cellular and developmental processes such as photomorphogenesis and auxin and jasmonate responses. The CSN complex is an essential regulator of the ubiquitin (Ubl) conjugation pathway by mediating the deneddylation of the cullin subunits of SCF-type E3 ligase complexes, leading to decrease the Ubl ligase activity of SCF. It is involved in repression of photomorphogenesis in darkness by regulating the activity of COP1-containing Ubl ligase complexes. In Brassica oleracea (Wild cabbage), this protein is COP9 signalosome complex subunit 6a (CSN6A).